The primary structure comprises 473 residues: Putative sulfoquinovose importer (473 aa).

11 helical membrane passes run alanine 18–leucine 38, leucine 45–phenylalanine 65, proline 88–threonine 108, phenylalanine 110–tyrosine 130, glycine 160–phenylalanine 180, glycine 187–phenylalanine 207, leucine 239–isoleucine 259, tryptophan 276–valine 296, isoleucine 317–phenylalanine 337, isoleucine 380–proline 400, and leucine 415–tyrosine 435.

It belongs to the sodium:galactoside symporter (TC 2.A.2) family.

The protein localises to the cell inner membrane. Its function is as follows. Could be involved in sulfoquinovose import. This is Putative sulfoquinovose importer (yihO) from Salmonella typhimurium (strain LT2 / SGSC1412 / ATCC 700720).